The following is a 134-amino-acid chain: Small ribosomal subunit protein uS8c (134 aa).

Belongs to the universal ribosomal protein uS8 family. As to quaternary structure, part of the 30S ribosomal subunit.

The protein localises to the plastid. The protein resides in the chloroplast. One of the primary rRNA binding proteins, it binds directly to 16S rRNA central domain where it helps coordinate assembly of the platform of the 30S subunit. The chain is Small ribosomal subunit protein uS8c (rps8) from Phaseolus angularis (Azuki bean).